The primary structure comprises 1679 residues: GRIP and coiled-coil domain-containing protein 2 (1679 aa).

The residue at position 1 (Met-1) is an N-acetylmethionine. Disordered stretches follow at residues 1–23 (MEDS…KLET) and 1466–1522 (LKSE…SAGT). Residues 35–1469 (KQMMLLQKAK…ETQLFQLKSE (1435 aa)) are a coiled coil. Phosphoserine is present on residues Ser-1474 and Ser-1478. Polar residues predominate over residues 1474 to 1483 (SPASSHQPSK). The mediates interaction with RAB6A stretch occupies residues 1569–1608 (HLNGLLRETEATNAILMEQIKLLKSEIRRLERNQEREKSV). Residues 1569-1679 (HLNGLLRETE…SYLHSWSGLR (111 aa)) are mediates interaction with RAB9A. The 51-residue stretch at 1604–1654 (REKSVANLEYLKNVLLRFIFLKPGSERERLLPVIDTMLQLSPEEKGKLATV) folds into the GRIP domain.

Homodimer. Interacts (via GRIP domain) with RAB6A (preferentially in its GTP-bound form). May interact (RAB6A-dependent) with ARL1; might be involved in GCC2 Golgi localization. Interacts with CLASP1 and CLASP2; recruits both proteins to membranes of the TGN. Interacts with STX16. Interacts (probably via GRIP domain) with RAB9A (preferentially in its GTP-bound form).

The protein localises to the cytoplasm. It is found in the golgi apparatus. The protein resides in the trans-Golgi network membrane. Golgin which probably tethers transport vesicles to the trans-Golgi network (TGN) and regulates vesicular transport between the endosomes and the Golgi. As a RAB9A effector it is involved in recycling of the mannose 6-phosphate receptor from the late endosomes to the TGN. May also play a role in transport between the recycling endosomes and the Golgi. Required for maintenance of the Golgi structure, it is involved in the biogenesis of noncentrosomal, Golgi-associated microtubules through recruitment of CLASP1 and CLASP2. The chain is GRIP and coiled-coil domain-containing protein 2 (Gcc2) from Rattus norvegicus (Rat).